The following is a 382-amino-acid chain: Glutamyl-tRNA reductase (382 aa).

Substrate is bound by residues 38-41 (TCNR), S85, 90-92 (ENQ), and Q96. C39 acts as the Nucleophile in catalysis. NADP(+) is bound at residue 164–169 (GAGEMG).

This sequence belongs to the glutamyl-tRNA reductase family. Homodimer.

It catalyses the reaction (S)-4-amino-5-oxopentanoate + tRNA(Glu) + NADP(+) = L-glutamyl-tRNA(Glu) + NADPH + H(+). Its pathway is porphyrin-containing compound metabolism; protoporphyrin-IX biosynthesis; 5-aminolevulinate from L-glutamyl-tRNA(Glu): step 1/2. Catalyzes the NADPH-dependent reduction of glutamyl-tRNA(Glu) to glutamate 1-semialdehyde (GSA). The chain is Glutamyl-tRNA reductase from Methanococcus maripaludis (strain C6 / ATCC BAA-1332).